The sequence spans 288 residues: Energy-coupling factor transporter ATP-binding protein EcfA2 (288 aa).

Residues 3-243 form the ABC transporter domain; sequence IVFEAVSHIY…RAELEAIGLG (241 aa). 40 to 47 is an ATP binding site; sequence GPTGSGKS.

Belongs to the ABC transporter superfamily. Energy-coupling factor EcfA family. As to quaternary structure, forms a stable energy-coupling factor (ECF) transporter complex composed of 2 membrane-embedded substrate-binding proteins (S component), 2 ATP-binding proteins (A component) and 2 transmembrane proteins (T component).

It localises to the cell membrane. ATP-binding (A) component of a common energy-coupling factor (ECF) ABC-transporter complex. Unlike classic ABC transporters this ECF transporter provides the energy necessary to transport a number of different substrates. In Symbiobacterium thermophilum (strain DSM 24528 / JCM 14929 / IAM 14863 / T), this protein is Energy-coupling factor transporter ATP-binding protein EcfA2.